The following is a 114-amino-acid chain: PDZK1-interacting protein 1 (114 aa).

Topologically, residues 1–28 (MSALSLLILGLLTAVPPASCQQGLGNLQ) are extracellular. The helical transmembrane segment at 29–51 (PWMQGLIAVAVFLVLVAIAFAVN) threads the bilayer. Residues 52–114 (HFWCQEEPEP…EEGKVRSTPM (63 aa)) lie on the Cytoplasmic side of the membrane. A Phosphoserine modification is found at serine 85. Positions 94–114 (EHENAYENVPEEEGKVRSTPM) are disordered. Residues 105–114 (EEGKVRSTPM) are compositionally biased toward basic and acidic residues.

It belongs to the PDZK1-interacting protein 1/SMIM24 family. Forms a heterodimer (via N-terminal transmembrane helix) with SLC5A2/SGLT2 (via TM13); this interaction enhances SLC5A2 transporter activity. Interacts with PDZK1.

Its subcellular location is the apical cell membrane. In terms of biological role, auxiliary protein of electrogenic Na(+)-coupled sugar symporter SLC5A2/SGLT2 and SLC5A1/SGLT1. Essential for the transporter activity of SLC5A2/SGLT2 but not SLC5A1/SGLT1. The chain is PDZK1-interacting protein 1 from Homo sapiens (Human).